The following is a 488-amino-acid chain: NAD-reducing hydrogenase HoxS subunit beta (488 aa).

4 residues coordinate Ni(2+): Cys62, Cys65, Cys458, and Cys461.

This sequence belongs to the [NiFe]/[NiFeSe] hydrogenase large subunit family. In terms of assembly, tetramer of an alpha and a gamma subunits (flavin-containing dimer), and a delta and a nickel-containing beta subunits (hydrogenase dimer). The cofactor is FMN. Ni(2+) serves as cofactor.

The protein localises to the cytoplasm. The catalysed reaction is H2 + NAD(+) = NADH + H(+). The sequence is that of NAD-reducing hydrogenase HoxS subunit beta (hoxH) from Cupriavidus necator (strain ATCC 17699 / DSM 428 / KCTC 22496 / NCIMB 10442 / H16 / Stanier 337) (Ralstonia eutropha).